The sequence spans 265 residues: Tryptophan synthase alpha chain (265 aa).

Active-site proton acceptor residues include glutamate 49 and aspartate 60.

Belongs to the TrpA family. Tetramer of two alpha and two beta chains.

The catalysed reaction is (1S,2R)-1-C-(indol-3-yl)glycerol 3-phosphate + L-serine = D-glyceraldehyde 3-phosphate + L-tryptophan + H2O. Its pathway is amino-acid biosynthesis; L-tryptophan biosynthesis; L-tryptophan from chorismate: step 5/5. The alpha subunit is responsible for the aldol cleavage of indoleglycerol phosphate to indole and glyceraldehyde 3-phosphate. This is Tryptophan synthase alpha chain from Cupriavidus taiwanensis (strain DSM 17343 / BCRC 17206 / CCUG 44338 / CIP 107171 / LMG 19424 / R1) (Ralstonia taiwanensis (strain LMG 19424)).